The following is a 367-amino-acid chain: Peptide chain release factor 2 (367 aa).

Gln250 is modified (N5-methylglutamine).

This sequence belongs to the prokaryotic/mitochondrial release factor family. Post-translationally, methylated by PrmC. Methylation increases the termination efficiency of RF2.

The protein resides in the cytoplasm. Its function is as follows. Peptide chain release factor 2 directs the termination of translation in response to the peptide chain termination codons UGA and UAA. This Kineococcus radiotolerans (strain ATCC BAA-149 / DSM 14245 / SRS30216) protein is Peptide chain release factor 2.